We begin with the raw amino-acid sequence, 583 residues long: Chitinase 2 (583 aa).

Positions Met-1–Ala-19 are cleaved as a signal peptide. Residues Asn-23–Asn-305 form the GH18 domain. Glu-153 functions as the Proton donor in the catalytic mechanism. N-linked (GlcNAc...) asparagine glycosylation is found at Asn-370, Asn-546, and Asn-549. The GPI-anchor amidated glycine moiety is linked to residue Gly-560. Residues Ala-561–Phe-583 constitute a propeptide, removed in mature form.

The protein belongs to the glycosyl hydrolase 18 family. Chitinase class III subfamily. The GPI-anchor is attached to the protein in the endoplasmic reticulum and serves to target the protein to the cell surface. There, the glucosamine-inositol phospholipid moiety is cleaved off and the GPI-modified mannoprotein is covalently attached via its lipidless GPI glycan remnant to the 1,6-beta-glucan of the outer cell wall layer. Post-translationally, proteolytic cleavage by SAP9 and SAP10 leads to the cell wall release of CHT2 and increased chitinase activity, suggesting a direct influence of SAP9 and SAP10 on CHT2 function.

Its subcellular location is the secreted. It is found in the cell wall. The protein resides in the membrane. It catalyses the reaction Random endo-hydrolysis of N-acetyl-beta-D-glucosaminide (1-&gt;4)-beta-linkages in chitin and chitodextrins.. Chitinase involved in the remodeling of chitin in the fungal cell wall. Plays a role in cell separation. This chain is Chitinase 2 (CHT2), found in Candida albicans (strain SC5314 / ATCC MYA-2876) (Yeast).